The chain runs to 476 residues: Cardiolipin synthase (476 aa).

Helical transmembrane passes span 2–22 and 31–51; these read HLFINMIFLINIVFIISIIFI and WAWILILTFLPILGFIIYILF. 2 consecutive PLD phosphodiesterase domains span residues 207–234 and 389–416; these read INYRNHRKILIIDSKVAFLGGFNIGDEY and EKGFLHAKTIVADSSICSVGTANMDIRS. Catalysis depends on residues His-212, Lys-214, Asp-219, His-394, Lys-396, and Asp-401.

Belongs to the phospholipase D family. Cardiolipin synthase subfamily.

The protein localises to the cell membrane. It catalyses the reaction 2 a 1,2-diacyl-sn-glycero-3-phospho-(1'-sn-glycerol) = a cardiolipin + glycerol. Its function is as follows. Catalyzes the reversible phosphatidyl group transfer from one phosphatidylglycerol molecule to another to form cardiolipin (CL) (diphosphatidylglycerol) and glycerol. The sequence is that of Cardiolipin synthase (cls) from Clostridium perfringens (strain ATCC 13124 / DSM 756 / JCM 1290 / NCIMB 6125 / NCTC 8237 / Type A).